The chain runs to 557 residues: Jerky protein (557 aa).

One can recognise an HTH psq-type domain in the interval 11-62; sequence KGEKRKRVVLTLKEKIDICTRLERGESRKALMQEYNVGMSTLYDIKAHKAQL. DNA-binding regions (H-T-H motif) lie at residues 38–58 and 110–142; these read RKAL…IKAH and PMLI…FKAR. The HTH CENPB-type domain occupies 77 to 149; it reads QRRTLHTPKL…KARHGIKKLD (73 aa). Residues 213–382 form the DDE-1 domain; sequence KDRLTVLMCA…VPSQVFQRAW (170 aa).

Belongs to the tigger transposable element derived protein family. In terms of tissue distribution, brain; highest in the temporal and brainstem regions.

The protein resides in the nucleus. In terms of biological role, may bind DNA. This is Jerky protein from Mus musculus (Mouse).